The primary structure comprises 585 residues: Rab GTPase-binding effector protein 2 (585 aa).

A2 carries the N-acetylalanine modification. The stretch at 27–183 forms a coiled coil; it reads QEGAKVEAES…ELIQEIQRRP (157 aa). 3 disordered regions span residues 178 to 265, 381 to 408, and 491 to 515; these read EIQR…ASLV, ENQGLRAEQPSSSVPRVLEQDEGWEESL, and EEQSKAKRQEVLRPSQGTGRTEEAQ. Phosphoserine is present on residues S188, S192, S198, and S202. A coiled-coil region spans residues 288–540; the sequence is NQWEQLQLEG…QAELETSEQV (253 aa). A compositionally biased stretch (basic and acidic residues) spans 491–501; the sequence is EEQSKAKRQEV.

This sequence belongs to the rabaptin family. In terms of assembly, heterodimer with RABGEF1. The dimer binds RAB5A that has been activated by GTP-binding. Interacts with SDCCAG8; this interaction is important for ciliogenesis regulation. Interacts with RAB4; this interaction may mediate VEGFR2 cell surface expression.

The protein localises to the cytoplasm. It is found in the early endosome. It localises to the cytoskeleton. Its subcellular location is the microtubule organizing center. The protein resides in the centrosome. The protein localises to the cilium basal body. In terms of biological role, plays a role in membrane trafficking and in homotypic early endosome fusion. Participates in arteriogenesis by regulating vascular endothelial growth factor receptor 2/VEGFR2 cell surface expression and endosomal trafficking. By interacting with SDCCAG8, localizes to centrosomes and plays a critical role in ciliogenesis. This is Rab GTPase-binding effector protein 2 (RABEP2) from Bos taurus (Bovine).